We begin with the raw amino-acid sequence, 544 residues long: MSLVACECPPGPGLEPEPCSRARSQACMYLEQIRNRVATGTADVTKRDYLVDAATQIHLALERDVSEDYEAAFNHYQNGVDVLLRGVHVDPNKERREAVKLKITKYLRRAEEIFNCHLQRTLGSGASPNTGFSSLRLRPIRTLSSALEQLKGCRVVGIIKKVQVVQDPATGGTFIVKSLPRCHMVSRERLTIIPHGVPYMTKLLRYFVSEDSIFLHLEHVQGGTLWSHLLSQDHFQYSGLNSGSVQEKSQAQLSTRLSLMTPAELTPGHTLRQNRIPMEPPRTSQSLPPALQLQKEADAEPSSRPSAVFSSDPTEAPCGHSHSQVRRAGQSSNPAPTQRLHWVREGADRVLGAYGRGRGRNPPSANRASLGSGRAAWSLREGQVKQWAAEMLLALEALHQQGVLCRDLNPQNLLLDQAGHIQLTYFGQWSEVEPRCSQEAVDCLYSAPEVGGISELTEACDWWSYGSLLYELLTGMALSQSHPSGFQAHTQLQLPEWLSHPAASLLTELLQFEPQRRLGAGGGGTSRLKSHPFFSTIQWSRLMG.

The MIT domain maps to 87–115; sequence VHVDPNKERREAVKLKITKYLRRAEEIFN. The 390-residue stretch at 145-534 folds into the Protein kinase domain; that stretch reads SALEQLKGCR…TSRLKSHPFF (390 aa). ATP is bound by residues 151–159 and Lys177; that span reads KGCRVVGII. 2 disordered regions span residues 262 to 344 and 353 to 372; these read PAEL…HWVR and AYGRGRGRNPPSANRASLGS. Polar residues predominate over residues 303-313; sequence SRPSAVFSSDP. The active-site Proton acceptor is Asp407.

The protein belongs to the protein kinase superfamily. Ser/Thr protein kinase family. S6 kinase subfamily.

It carries out the reaction L-seryl-[protein] + ATP = O-phospho-L-seryl-[protein] + ADP + H(+). The catalysed reaction is L-threonyl-[protein] + ATP = O-phospho-L-threonyl-[protein] + ADP + H(+). The protein is Ribosomal protein S6 kinase-like 1 (Rps6kl1) of Mus musculus (Mouse).